We begin with the raw amino-acid sequence, 165 residues long: Chorismate pyruvate-lyase (165 aa).

Substrate-binding residues include Met35, Arg77, Leu115, and Glu156.

Belongs to the UbiC family. Monomer.

The protein resides in the cytoplasm. The catalysed reaction is chorismate = 4-hydroxybenzoate + pyruvate. It functions in the pathway cofactor biosynthesis; ubiquinone biosynthesis. Removes the pyruvyl group from chorismate, with concomitant aromatization of the ring, to provide 4-hydroxybenzoate (4HB) for the ubiquinone pathway. The polypeptide is Chorismate pyruvate-lyase (Salmonella agona (strain SL483)).